The primary structure comprises 413 residues: Multifunctional CCA protein (413 aa).

2 residues coordinate ATP: G8 and R11. CTP contacts are provided by G8 and R11. The Mg(2+) site is built by D21 and D23. The ATP site is built by R91, R143, and R146. CTP-binding residues include R91, R143, and R146. Residues 232 to 333 enclose the HD domain; sequence TGVHVMMVID…VRLLERADAL (102 aa).

It belongs to the tRNA nucleotidyltransferase/poly(A) polymerase family. Bacterial CCA-adding enzyme type 1 subfamily. As to quaternary structure, monomer. Can also form homodimers and oligomers. The cofactor is Mg(2+). Requires Ni(2+) as cofactor.

The enzyme catalyses a tRNA precursor + 2 CTP + ATP = a tRNA with a 3' CCA end + 3 diphosphate. It carries out the reaction a tRNA with a 3' CCA end + 2 CTP + ATP = a tRNA with a 3' CCACCA end + 3 diphosphate. In terms of biological role, catalyzes the addition and repair of the essential 3'-terminal CCA sequence in tRNAs without using a nucleic acid template. Adds these three nucleotides in the order of C, C, and A to the tRNA nucleotide-73, using CTP and ATP as substrates and producing inorganic pyrophosphate. tRNA 3'-terminal CCA addition is required both for tRNA processing and repair. Also involved in tRNA surveillance by mediating tandem CCA addition to generate a CCACCA at the 3' terminus of unstable tRNAs. While stable tRNAs receive only 3'-terminal CCA, unstable tRNAs are marked with CCACCA and rapidly degraded. This is Multifunctional CCA protein from Burkholderia pseudomallei (strain 668).